The chain runs to 173 residues: Alpha-crystallin A chain (173 aa).

At Met1 the chain carries N-acetylmethionine. Positions 1–63 (MDIAIQHPWF…RTVLDSGISE (63 aa)) are required for complex formation with BFSP1 and BFSP2. Gln6 is subject to Deamidated glutamine; partial. At Ser45 the chain carries Phosphoserine. Deamidated glutamine; partial is present on Gln50. The 111-residue stretch at 52-162 (LFRTVLDSGI…GHSERAIPVS (111 aa)) folds into the sHSP domain. N6-acetyllysine is present on residues Lys70 and Lys99. His100 contributes to the Zn(2+) binding site. Asn101 is subject to Deamidated asparagine; partial. Zn(2+)-binding residues include Glu102 and His107. Ser122 is subject to Phosphoserine. The residue at position 123 (Asn123) is a Deamidated asparagine; partial. A disordered region spans residues 144 to 173 (PKVPSGMDAGHSERAIPVSREEKPSSAPSS). Over residues 153 to 167 (GHSERAIPVSREEKP) the composition is skewed to basic and acidic residues. His154 contributes to the Zn(2+) binding site. A glycan (O-linked (GlcNAc) serine) is linked at Ser162.

It belongs to the small heat shock protein (HSP20) family. Heteromer composed of three CRYAA and one CRYAB subunits. Inter-subunit bridging via zinc ions enhances stability, which is crucial as there is no protein turn over in the lens. Can also form homodimers and homotetramers (dimers of dimers) which serve as the building blocks of homooligomers. Within homooligomers, the zinc-binding motif is created from residues of 3 different molecules. His-100 and Glu-102 from one molecule are ligands of the zinc ion, and His-107 and His-154 residues from additional molecules complete the site with tetrahedral coordination geometry. Part of a complex required for lens intermediate filament formation composed of BFSP1, BFSP2 and CRYAA. In terms of processing, acetylation at Lys-70 may increase chaperone activity. Post-translationally, undergoes age-dependent proteolytical cleavage at the C-terminus.

It localises to the cytoplasm. It is found in the nucleus. Its function is as follows. Contributes to the transparency and refractive index of the lens. Acts as a chaperone, preventing aggregation of various proteins under a wide range of stress conditions. Required for the correct formation of lens intermediate filaments as part of a complex composed of BFSP1, BFSP2 and CRYAA. In Melursus ursinus (Sloth bear), this protein is Alpha-crystallin A chain (CRYAA).